Reading from the N-terminus, the 204-residue chain is Phosphoheptose isomerase (204 aa).

The region spanning 38–199 is the SIS domain; it reads MAVALARGGK…LFEAVMELGP (162 aa). 53–55 serves as a coordination point for substrate; sequence NGG. Residues His62 and Glu66 each coordinate Zn(2+). Residues Glu66, 95–96, 121–123, Ser126, and Gln172 contribute to the substrate site; these read ND and STS. Zn(2+)-binding residues include Gln172 and His180.

Belongs to the SIS family. GmhA subfamily. As to quaternary structure, homotetramer. Zn(2+) serves as cofactor.

Its subcellular location is the cytoplasm. It catalyses the reaction 2 D-sedoheptulose 7-phosphate = D-glycero-alpha-D-manno-heptose 7-phosphate + D-glycero-beta-D-manno-heptose 7-phosphate. Its pathway is carbohydrate biosynthesis; D-glycero-D-manno-heptose 7-phosphate biosynthesis; D-glycero-alpha-D-manno-heptose 7-phosphate and D-glycero-beta-D-manno-heptose 7-phosphate from sedoheptulose 7-phosphate: step 1/1. Its function is as follows. Catalyzes the isomerization of sedoheptulose 7-phosphate in D-glycero-D-manno-heptose 7-phosphate. This Solidesulfovibrio magneticus (strain ATCC 700980 / DSM 13731 / RS-1) (Desulfovibrio magneticus) protein is Phosphoheptose isomerase.